Reading from the N-terminus, the 200-residue chain is MTDFPPLVIDYHGSRLAGVDEVGRGPLVGAVVAAAVILDPARPIEGLADSKTLSEKRRLALADAIREQAAACAVAEASAEEIDALNIFHATHLAMRRAIDALPVTAEYLLVDGNRMPGHHVPGQCVVKGDRRHAAIGAASILAKVTRDAQMVALHERHPEYGFARHKGYPTREHLAALERLGPLEEHRRSFAPVKQWQLL.

The RNase H type-2 domain occupies serine 14–leucine 200. Residues aspartate 20, glutamate 21, and aspartate 112 each contribute to the a divalent metal cation site.

This sequence belongs to the RNase HII family. It depends on Mn(2+) as a cofactor. Mg(2+) serves as cofactor.

The protein resides in the cytoplasm. The enzyme catalyses Endonucleolytic cleavage to 5'-phosphomonoester.. Its function is as follows. Endonuclease that specifically degrades the RNA of RNA-DNA hybrids. This is Ribonuclease HII from Chromohalobacter salexigens (strain ATCC BAA-138 / DSM 3043 / CIP 106854 / NCIMB 13768 / 1H11).